The following is a 547-amino-acid chain: Methionine--tRNA ligase (547 aa).

Positions 13 to 23 match the 'HIGH' region motif; the sequence is PYANGPLHIGH. The Zn(2+) site is built by C145, C148, C158, and C161. The 'KMSKS' region motif lies at 334–338; it reads QFSKS. K337 provides a ligand contact to ATP.

Belongs to the class-I aminoacyl-tRNA synthetase family. MetG type 1 subfamily. The cofactor is Zn(2+).

It is found in the cytoplasm. It catalyses the reaction tRNA(Met) + L-methionine + ATP = L-methionyl-tRNA(Met) + AMP + diphosphate. Its function is as follows. Is required not only for elongation of protein synthesis but also for the initiation of all mRNA translation through initiator tRNA(fMet) aminoacylation. The polypeptide is Methionine--tRNA ligase (Thermoplasma acidophilum (strain ATCC 25905 / DSM 1728 / JCM 9062 / NBRC 15155 / AMRC-C165)).